Here is a 459-residue protein sequence, read N- to C-terminus: Bifunctional protein GlmU (459 aa).

Residues 1–230 (MSNRFAVILA…FDETLGVNDR (230 aa)) are pyrophosphorylase. Residues 9–12 (LAAG), Lys23, Gln73, and 78–79 (GT) each bind UDP-N-acetyl-alpha-D-glucosamine. Asp103 contributes to the Mg(2+) binding site. UDP-N-acetyl-alpha-D-glucosamine-binding residues include Gly140, Glu155, Asn170, and Asn228. Asn228 serves as a coordination point for Mg(2+). Residues 231–251 (VALSQAEIIMKNRINRKNMVN) form a linker region. The tract at residues 252-459 (GVTIIDPSNT…VDQLLNKKKS (208 aa)) is N-acetyltransferase. The UDP-N-acetyl-alpha-D-glucosamine site is built by Arg333 and Lys351. The active-site Proton acceptor is His363. The UDP-N-acetyl-alpha-D-glucosamine site is built by Tyr366 and Asn377. Acetyl-CoA-binding positions include 386–387 (NY), Ala423, and Arg440.

This sequence in the N-terminal section; belongs to the N-acetylglucosamine-1-phosphate uridyltransferase family. It in the C-terminal section; belongs to the transferase hexapeptide repeat family. As to quaternary structure, homotrimer. Mg(2+) is required as a cofactor.

It localises to the cytoplasm. The enzyme catalyses alpha-D-glucosamine 1-phosphate + acetyl-CoA = N-acetyl-alpha-D-glucosamine 1-phosphate + CoA + H(+). It catalyses the reaction N-acetyl-alpha-D-glucosamine 1-phosphate + UTP + H(+) = UDP-N-acetyl-alpha-D-glucosamine + diphosphate. It participates in nucleotide-sugar biosynthesis; UDP-N-acetyl-alpha-D-glucosamine biosynthesis; N-acetyl-alpha-D-glucosamine 1-phosphate from alpha-D-glucosamine 6-phosphate (route II): step 2/2. Its pathway is nucleotide-sugar biosynthesis; UDP-N-acetyl-alpha-D-glucosamine biosynthesis; UDP-N-acetyl-alpha-D-glucosamine from N-acetyl-alpha-D-glucosamine 1-phosphate: step 1/1. It functions in the pathway bacterial outer membrane biogenesis; LPS lipid A biosynthesis. In terms of biological role, catalyzes the last two sequential reactions in the de novo biosynthetic pathway for UDP-N-acetylglucosamine (UDP-GlcNAc). The C-terminal domain catalyzes the transfer of acetyl group from acetyl coenzyme A to glucosamine-1-phosphate (GlcN-1-P) to produce N-acetylglucosamine-1-phosphate (GlcNAc-1-P), which is converted into UDP-GlcNAc by the transfer of uridine 5-monophosphate (from uridine 5-triphosphate), a reaction catalyzed by the N-terminal domain. This is Bifunctional protein GlmU from Bacillus anthracis (strain A0248).